A 179-amino-acid chain; its full sequence is Large ribosomal subunit protein uL5 (179 aa).

This sequence belongs to the universal ribosomal protein uL5 family. As to quaternary structure, part of the 50S ribosomal subunit; part of the 5S rRNA/L5/L18/L25 subcomplex. Contacts the 5S rRNA and the P site tRNA. Forms a bridge to the 30S subunit in the 70S ribosome.

Its function is as follows. This is one of the proteins that bind and probably mediate the attachment of the 5S RNA into the large ribosomal subunit, where it forms part of the central protuberance. In the 70S ribosome it contacts protein S13 of the 30S subunit (bridge B1b), connecting the 2 subunits; this bridge is implicated in subunit movement. Contacts the P site tRNA; the 5S rRNA and some of its associated proteins might help stabilize positioning of ribosome-bound tRNAs. This Burkholderia vietnamiensis (strain G4 / LMG 22486) (Burkholderia cepacia (strain R1808)) protein is Large ribosomal subunit protein uL5.